A 251-amino-acid chain; its full sequence is 3-deoxy-manno-octulosonate cytidylyltransferase (251 aa).

It belongs to the KdsB family.

It localises to the cytoplasm. The enzyme catalyses 3-deoxy-alpha-D-manno-oct-2-ulosonate + CTP = CMP-3-deoxy-beta-D-manno-octulosonate + diphosphate. It participates in nucleotide-sugar biosynthesis; CMP-3-deoxy-D-manno-octulosonate biosynthesis; CMP-3-deoxy-D-manno-octulosonate from 3-deoxy-D-manno-octulosonate and CTP: step 1/1. The protein operates within bacterial outer membrane biogenesis; lipopolysaccharide biosynthesis. Its function is as follows. Activates KDO (a required 8-carbon sugar) for incorporation into bacterial lipopolysaccharide in Gram-negative bacteria. This chain is 3-deoxy-manno-octulosonate cytidylyltransferase, found in Agrobacterium fabrum (strain C58 / ATCC 33970) (Agrobacterium tumefaciens (strain C58)).